The chain runs to 184 residues: dITP/XTP pyrophosphatase (184 aa).

7-12 is a binding site for substrate; sequence TSNPGK. 2 residues coordinate Mg(2+): Glu-36 and Asp-65. Asp-65 functions as the Proton acceptor in the catalytic mechanism. Substrate-binding positions include Ser-66, 139–142, Lys-162, and 167–168; these read FGFD and HR.

Belongs to the HAM1 NTPase family. In terms of assembly, homodimer. Requires Mg(2+) as cofactor.

The enzyme catalyses XTP + H2O = XMP + diphosphate + H(+). The catalysed reaction is dITP + H2O = dIMP + diphosphate + H(+). It catalyses the reaction ITP + H2O = IMP + diphosphate + H(+). Functionally, pyrophosphatase that catalyzes the hydrolysis of nucleoside triphosphates to their monophosphate derivatives, with a high preference for the non-canonical purine nucleotides XTP (xanthosine triphosphate), dITP (deoxyinosine triphosphate) and ITP. Seems to function as a house-cleaning enzyme that removes non-canonical purine nucleotides from the nucleotide pool, thus preventing their incorporation into DNA/RNA and avoiding chromosomal lesions. The protein is dITP/XTP pyrophosphatase of Thermococcus kodakarensis (strain ATCC BAA-918 / JCM 12380 / KOD1) (Pyrococcus kodakaraensis (strain KOD1)).